Here is a 456-residue protein sequence, read N- to C-terminus: TGACG-sequence-specific DNA-binding protein TGA-2.1 (456 aa).

Disordered regions lie at residues 1–41 (MASK…NTSR) and 115–170 (SASG…QKTL). Composition is skewed to polar residues over residues 9 to 41 (GNRS…NTSR) and 125 to 141 (GESN…TSTD). A compositionally biased stretch (basic and acidic residues) spans 158 to 169 (DKSKEKVLDQKT). The bZIP domain occupies 166-229 (DQKTLRRLAQ…NIADQSNGVG (64 aa)). A coiled-coil region spans residues 167 to 220 (QKTLRRLAQNREAARKSRLRKKAYVQQLENSRLKLSQLEQDLQRARQQGKYISN). Positions 168–188 (KTLRRLAQNREAARKSRLRKK) are basic motif. The interval 194–208 (LENSRLKLSQLEQDL) is leucine-zipper. The region spanning 233-450 (PLAFDAEYSR…RALSSLWLAR (218 aa)) is the DOG1 domain.

This sequence belongs to the bZIP family. Can form heterodimer with TGA2.2.

The protein localises to the nucleus. Functionally, transcriptional activator that binds specifically to the DNA sequence 5'-TGACG-3'. Recognizes ocs elements like the as-1 motif of the cauliflower mosaic virus 35S promoter. Binding to the as-1-like cis elements mediate auxin- and salicylic acid-inducible transcription. The sequence is that of TGACG-sequence-specific DNA-binding protein TGA-2.1 (TGA21) from Nicotiana tabacum (Common tobacco).